Consider the following 167-residue polypeptide: Transcriptional regulator MraZ (167 aa).

SpoVT-AbrB domains lie at 8-51 and 92-135; these read ESHH…YGDH and SLPT…KPET.

The protein belongs to the MraZ family. Forms oligomers.

Its subcellular location is the cytoplasm. The protein localises to the nucleoid. The sequence is that of Transcriptional regulator MraZ from Ruegeria sp. (strain TM1040) (Silicibacter sp.).